The chain runs to 292 residues: Sulfofructosephosphate aldolase (292 aa).

Lys193 acts as the Schiff-base intermediate with substrate in catalysis.

This sequence belongs to the aldolase LacD family. Homotetramer.

It carries out the reaction 6-deoxy-6-sulfo-D-fructose 1-phosphate = (2S)-3-sulfolactaldehyde + dihydroxyacetone phosphate. In terms of biological role, cleaves 6-deoxy-6-sulfo-D-fructose 1-phosphate (SFP) to form dihydroxyacetone phosphate (DHAP) and 3-sulfolactaldehyde (SLA). Can also catalyze the reverse reaction. The chain is Sulfofructosephosphate aldolase (yihT) from Salmonella typhimurium (strain LT2 / SGSC1412 / ATCC 700720).